The primary structure comprises 178 residues: MKKFSRKTEETEVEVVLGEELKVDTGIAFLDHMLKTLSRHSGIKLRVKAKGDLEHHVIEDVAIALGKALAGVDKKGLERFGDAIVPMDDAVAICGLDFSGRGVLVVEGTFGDGEMREEDFLHFLDTLCRNAGLNVYLSVKGSNSHHKMEAAVKAVAISLKKALTKNGNDYRSAKGVLD.

It belongs to the imidazoleglycerol-phosphate dehydratase family.

It is found in the cytoplasm. It carries out the reaction D-erythro-1-(imidazol-4-yl)glycerol 3-phosphate = 3-(imidazol-4-yl)-2-oxopropyl phosphate + H2O. The protein operates within amino-acid biosynthesis; L-histidine biosynthesis; L-histidine from 5-phospho-alpha-D-ribose 1-diphosphate: step 6/9. The chain is Imidazoleglycerol-phosphate dehydratase from Archaeoglobus fulgidus (strain ATCC 49558 / DSM 4304 / JCM 9628 / NBRC 100126 / VC-16).